The following is a 471-amino-acid chain: Trehalose-binding lipoprotein LpqY (471 aa).

The N-terminal stretch at 1–28 is a signal peptide; the sequence is MDGRQVVRARRWCATAAVALMTASTVAA. The N-palmitoyl cysteine moiety is linked to residue cysteine 29. A lipid anchor (S-diacylglycerol cysteine) is attached at cysteine 29. Asparagine 45, glutamate 46, glutamine 79, aspartate 100, asparagine 154, tyrosine 198, tryptophan 279, tyrosine 281, glycine 354, and arginine 424 together coordinate alpha,alpha-trehalose. Cysteine 57 and cysteine 375 are disulfide-bonded.

Belongs to the bacterial solute-binding protein 1 family. As to quaternary structure, monomer. The complex is composed of two ATP-binding proteins (SugC), two transmembrane proteins (SugA and SugB) and a solute-binding protein (LpqY).

It localises to the cell inner membrane. Functionally, part of the ABC transporter complex LpqY-SugA-SugB-SugC, which is highly specific for uptake of trehalose. Involved in the recycling of extracellular trehalose released from trehalose-containing molecules synthesized by M.thermoresistibile. Trehalose uptake is essential for virulence. Binds deuterated trehalose with similar high affinity to trehalose, trehalose analogs including galactotrehalose, 4-azido-4-deoxy-trehalose, 6-azido-6-deoxy-trehalose, 3-azido-3-deoxy-trehalose and mannotrehalose in the order of decreasing affinity, respectively, and 2-azido-2-deoxy-trehalose and kojibiose (alpha1,2-glycosidic bond) with very low affinity. Does not recognize single glucose, 6-amino-6-deoxy-trehalose, trehalose-6-phosphate, nigerose (alpha1,3-glycosidic bond), maltose (alpha1,4-glycosidic bond), isomaltose (alpha1,6-glycosidic bond) or glycerophosphocholine. Decreased recognition of alpha,beta-trehalose and almost no recognition of beta,beta-trehalose. Substrate specificity indicates a strict requirement for an alpha1,1-linked disaccharide. In Mycolicibacterium thermoresistibile (strain ATCC 19527 / DSM 44167 / CIP 105390 / JCM 6362 / NCTC 10409 / 316) (Mycobacterium thermoresistibile), this protein is Trehalose-binding lipoprotein LpqY.